Consider the following 331-residue polypeptide: Ornithine carbamoyltransferase (331 aa).

Carbamoyl phosphate contacts are provided by residues 55–58 (STRT), glutamine 82, arginine 106, and 133–136 (HPTQ). L-ornithine contacts are provided by residues asparagine 166, aspartate 230, and 234-235 (SM). Carbamoyl phosphate is bound by residues 272–273 (CL) and arginine 317.

This sequence belongs to the aspartate/ornithine carbamoyltransferase superfamily. OTCase family.

It localises to the cytoplasm. The enzyme catalyses carbamoyl phosphate + L-ornithine = L-citrulline + phosphate + H(+). The protein operates within amino-acid biosynthesis; L-arginine biosynthesis; L-arginine from L-ornithine and carbamoyl phosphate: step 1/3. In terms of biological role, reversibly catalyzes the transfer of the carbamoyl group from carbamoyl phosphate (CP) to the N(epsilon) atom of ornithine (ORN) to produce L-citrulline. The sequence is that of Ornithine carbamoyltransferase (argF) from Neisseria gonorrhoeae.